The chain runs to 348 residues: Oxygen-dependent coproporphyrinogen-III oxidase (348 aa).

S104 lines the substrate pocket. A divalent metal cation is bound by residues H108 and H118. H118 functions as the Proton donor in the catalytic mechanism. 120–122 (NYR) contacts substrate. A divalent metal cation is bound by residues H152 and H182. The segment at 272 to 307 (YAEFNLVWDRGTIFGLQTNGRTESILMSLPPLARWE) is important for dimerization.

Belongs to the aerobic coproporphyrinogen-III oxidase family. Homodimer. A divalent metal cation serves as cofactor.

It is found in the cytoplasm. It catalyses the reaction coproporphyrinogen III + O2 + 2 H(+) = protoporphyrinogen IX + 2 CO2 + 2 H2O. The protein operates within porphyrin-containing compound metabolism; protoporphyrin-IX biosynthesis; protoporphyrinogen-IX from coproporphyrinogen-III (O2 route): step 1/1. Functionally, involved in the heme and chlorophyll biosynthesis. Catalyzes the aerobic oxidative decarboxylation of propionate groups of rings A and B of coproporphyrinogen-III to yield the vinyl groups in protoporphyrinogen-IX. This is Oxygen-dependent coproporphyrinogen-III oxidase from Prochlorococcus marinus (strain NATL2A).